We begin with the raw amino-acid sequence, 455 residues long: Chromosomal replication initiator protein DnaA (455 aa).

Positions 1-75 are domain I, interacts with DnaA modulators; sequence MDTNNNIEKE…EILSQNKVGM (75 aa). The tract at residues 75–106 is domain II; it reads MHLAHSVDVRIEVAPKIQISTQSNINYKATKM. The segment at 107–321 is domain III, AAA+ region; sequence SVKDSYTFEN…GAIIKISVNA (215 aa). Residues G151, G153, K154, and T155 each coordinate ATP. Residues 322-455 form a domain IV, binds dsDNA region; sequence NLMNASIDLN…DKKTAFNSSE (134 aa).

The protein belongs to the DnaA family. As to quaternary structure, oligomerizes as a right-handed, spiral filament on DNA at oriC.

The protein resides in the cytoplasm. Its function is as follows. Plays an essential role in the initiation and regulation of chromosomal replication. ATP-DnaA binds to the origin of replication (oriC) to initiate formation of the DNA replication initiation complex once per cell cycle. Binds the DnaA box (a 9 base pair repeat at the origin) and separates the double-stranded (ds)DNA. Forms a right-handed helical filament on oriC DNA; dsDNA binds to the exterior of the filament while single-stranded (ss)DNA is stabiized in the filament's interior. The ATP-DnaA-oriC complex binds and stabilizes one strand of the AT-rich DNA unwinding element (DUE), permitting loading of DNA polymerase. After initiation quickly degrades to an ADP-DnaA complex that is not apt for DNA replication. Binds acidic phospholipids. In Helicobacter pylori (strain HPAG1), this protein is Chromosomal replication initiator protein DnaA.